The chain runs to 137 residues: Ribosome-binding factor A (137 aa).

The protein belongs to the RbfA family. Monomer. Binds 30S ribosomal subunits, but not 50S ribosomal subunits or 70S ribosomes.

It is found in the cytoplasm. Its function is as follows. One of several proteins that assist in the late maturation steps of the functional core of the 30S ribosomal subunit. Associates with free 30S ribosomal subunits (but not with 30S subunits that are part of 70S ribosomes or polysomes). Required for efficient processing of 16S rRNA. May interact with the 5'-terminal helix region of 16S rRNA. This is Ribosome-binding factor A from Nitrobacter hamburgensis (strain DSM 10229 / NCIMB 13809 / X14).